The sequence spans 140 residues: uncharacterized protein (140 aa).

Positions 4–127 (TLTHLALHVP…AGNYVEFSYG (124 aa)) constitute a VOC domain.

This is an uncharacterized protein from Pseudomonas aeruginosa (strain ATCC 15692 / DSM 22644 / CIP 104116 / JCM 14847 / LMG 12228 / 1C / PRS 101 / PAO1).